The sequence spans 231 residues: 7-cyano-7-deazaguanine synthase (231 aa).

ATP is bound at residue Phe-8 to Leu-18. Residues Cys-188, Cys-197, Cys-200, and Cys-203 each contribute to the Zn(2+) site.

It belongs to the QueC family. It depends on Zn(2+) as a cofactor.

It carries out the reaction 7-carboxy-7-deazaguanine + NH4(+) + ATP = 7-cyano-7-deazaguanine + ADP + phosphate + H2O + H(+). Its pathway is purine metabolism; 7-cyano-7-deazaguanine biosynthesis. Its function is as follows. Catalyzes the ATP-dependent conversion of 7-carboxy-7-deazaguanine (CDG) to 7-cyano-7-deazaguanine (preQ(0)). The sequence is that of 7-cyano-7-deazaguanine synthase from Erwinia tasmaniensis (strain DSM 17950 / CFBP 7177 / CIP 109463 / NCPPB 4357 / Et1/99).